We begin with the raw amino-acid sequence, 770 residues long: Molybdenum cofactor sulfurase (770 aa).

N6-(pyridoxal phosphate)lysine is present on Lys-231. Residue Cys-395 is part of the active site. The MOSC domain occupies 601–770 (DWVSRALGVS…TVSGVIEESE (170 aa)).

The protein belongs to the class-V pyridoxal-phosphate-dependent aminotransferase family. MOCOS subfamily. It depends on pyridoxal 5'-phosphate as a cofactor.

It catalyses the reaction Mo-molybdopterin + L-cysteine + AH2 = thio-Mo-molybdopterin + L-alanine + A + H2O. Functionally, sulfurates the molybdenum cofactor. Sulfation of molybdenum is essential for xanthine dehydrogenase (XDH) and aldehyde oxidase (ADO) enzymes in which molybdenum cofactor is liganded by 1 oxygen and 1 sulfur atom in active form. The chain is Molybdenum cofactor sulfurase from Anopheles gambiae (African malaria mosquito).